Here is a 129-residue protein sequence, read N- to C-terminus: Defensin-like protein 182 (129 aa).

Positions 1-26 (METVTSLVFIVNLLIIFTSVVNQARG) are cleaved as a signal peptide. 8 disulfides stabilise this stretch: cysteine 29-cysteine 70, cysteine 36-cysteine 55, cysteine 39-cysteine 64, cysteine 43-cysteine 66, cysteine 83-cysteine 129, cysteine 94-cysteine 114, cysteine 99-cysteine 123, and cysteine 103-cysteine 125.

This sequence belongs to the DEFL family.

The protein localises to the secreted. Its function is as follows. Confers broad-spectrum resistance to pathogens. This is Defensin-like protein 182 (PDF3.2) from Arabidopsis thaliana (Mouse-ear cress).